The following is a 234-amino-acid chain: 2,3,4,5-tetrahydropyridine-2,6-dicarboxylate N-acetyltransferase (234 aa).

It belongs to the transferase hexapeptide repeat family. DapH subfamily.

The catalysed reaction is (S)-2,3,4,5-tetrahydrodipicolinate + acetyl-CoA + H2O = L-2-acetamido-6-oxoheptanedioate + CoA. The protein operates within amino-acid biosynthesis; L-lysine biosynthesis via DAP pathway; LL-2,6-diaminopimelate from (S)-tetrahydrodipicolinate (acetylase route): step 1/3. In terms of biological role, catalyzes the transfer of an acetyl group from acetyl-CoA to tetrahydrodipicolinate. This Ligilactobacillus salivarius (strain UCC118) (Lactobacillus salivarius) protein is 2,3,4,5-tetrahydropyridine-2,6-dicarboxylate N-acetyltransferase.